A 618-amino-acid polypeptide reads, in one-letter code: Cationic amino acid transporter 3 (618 aa).

Residues 1–36 (MLWQALRRFGQKLVRRRVLELGMGETRLARCLSTLD) are Cytoplasmic-facing. A helical transmembrane segment spans residues 37–57 (LVALGVGSTLGAGVYVLAGEV). Topologically, residues 58–61 (AKDK) are extracellular. The helical transmembrane segment at 62 to 82 (AGPSIVICFLVAALSSVLAGL) threads the bilayer. The Cytoplasmic segment spans residues 83 to 107 (CYAEFGARVPGSGSAYLYSYVTVGE). A helical transmembrane segment spans residues 108-128 (LWAFTTGWNLILSYVIGTASV). The Extracellular segment spans residues 129–162 (ARAWSSAFDNLIGNHISRTLKGTILLKMPHVLAE). Residues 163–183 (YPDFFALALVLLLTGLLVLGA) traverse the membrane as a helical segment. Over 184 to 191 (SKSALVTK) the chain is Cytoplasmic. A helical transmembrane segment spans residues 192–212 (VFTGMNLLVLSFVIISGFIKG). The Extracellular segment spans residues 213–244 (ELRNWKLTKEDYCLTMSESNGTCSLDSMGSGG). Asn-232 is a glycosylation site (N-linked (GlcNAc...) asparagine). The helical transmembrane segment at 245-265 (FMPFGLEGILRGAATCFYAFV) threads the bilayer. Over 266–285 (GFDCIATTGEEAQNPQRSIP) the chain is Cytoplasmic. The helical transmembrane segment at 286–306 (MGIVISMFICFLAYFGVSSAL) threads the bilayer. Residues 307–335 (TLMMPYYKLHPESPLPEAFSYVGWEPARY) are Extracellular-facing. A helical membrane pass occupies residues 336 to 356 (LVAIGSLCALSTSLLGSMFPM). At 357-380 (PRVMYSMAEDGLLFRVLAKVHSVT) the chain is on the cytoplasmic side. Residues 381-401 (HIPIVATLVSGVIAAFMAFLF) form a helical membrane-spanning segment. At 402 to 406 (ELTDL) the chain is on the extracellular side. Residues 407–427 (VDLMSIGTLLAHSLVSICVLI) traverse the membrane as a helical segment. The Cytoplasmic portion of the chain corresponds to 428–474 (LRYQPDQEMKSVEEEMELQEETLEAEKLTVQALFCPVNSIPTLLSGR). A helical membrane pass occupies residues 475 to 495 (VVYVCSSLLAVLLTVLCLVLT). Topologically, residues 496–506 (WWTTPLRSGDP) are extracellular. Residues 507–527 (VWVTVVVLILGLILAISGVIW) traverse the membrane as a helical segment. The Cytoplasmic segment spans residues 528–539 (RQPQNRTPLHFK). Residues 540-560 (VPAVPLLPLVSIFVNVYLMMQ) form a helical membrane-spanning segment. The Extracellular segment spans residues 561–568 (MTAGTWAR). Residues 569–589 (FGIWMLIGFAIYFGYGIQHSM) traverse the membrane as a helical segment. Residues 590-618 (KEVKNHQTLPKTRAQTIDLDLTTSCVHSI) are Cytoplasmic-facing. Position 605 is a phosphothreonine (Thr-605). Ser-617 bears the Phosphoserine mark.

This sequence belongs to the amino acid-polyamine-organocation (APC) superfamily. Cationic amino acid transporter (CAT) (TC 2.A.3.3) family. Post-translationally, N-glycosylated. In terms of tissue distribution, expressed in adult brain and in a wide variety of embryonic tissues.

The protein localises to the cell membrane. It carries out the reaction L-arginine(in) = L-arginine(out). It catalyses the reaction L-lysine(in) = L-lysine(out). The enzyme catalyses L-ornithine(in) = L-ornithine(out). Uniporter that mediates the uptake of cationic L-amino acids such as L-arginine, L-lysine and L-ornithine. The transport is sodium ions- and pH-independent, moderately trans-stimulated and is mediated by passive diffusion. The sequence is that of Cationic amino acid transporter 3 from Mus musculus (Mouse).